The following is a 154-amino-acid chain: 6,7-dimethyl-8-ribityllumazine synthase (154 aa).

5-amino-6-(D-ribitylamino)uracil-binding positions include Trp22, 56–58 (AWE), and 80–82 (CVI). 85–86 (DT) serves as a coordination point for (2S)-2-hydroxy-3-oxobutyl phosphate. His88 acts as the Proton donor in catalysis. Residue Asn113 coordinates 5-amino-6-(D-ribitylamino)uracil. A (2S)-2-hydroxy-3-oxobutyl phosphate-binding site is contributed by Arg127.

It belongs to the DMRL synthase family. In terms of assembly, forms an icosahedral capsid composed of 60 subunits, arranged as a dodecamer of pentamers.

The enzyme catalyses (2S)-2-hydroxy-3-oxobutyl phosphate + 5-amino-6-(D-ribitylamino)uracil = 6,7-dimethyl-8-(1-D-ribityl)lumazine + phosphate + 2 H2O + H(+). It participates in cofactor biosynthesis; riboflavin biosynthesis; riboflavin from 2-hydroxy-3-oxobutyl phosphate and 5-amino-6-(D-ribitylamino)uracil: step 1/2. Catalyzes the formation of 6,7-dimethyl-8-ribityllumazine by condensation of 5-amino-6-(D-ribitylamino)uracil with 3,4-dihydroxy-2-butanone 4-phosphate. This is the penultimate step in the biosynthesis of riboflavin. This chain is 6,7-dimethyl-8-ribityllumazine synthase, found in Xanthomonas campestris pv. campestris (strain 8004).